Reading from the N-terminus, the 341-residue chain is Aspartate carbamoyltransferase catalytic subunit (341 aa).

Carbamoyl phosphate-binding residues include arginine 74 and threonine 75. Residue lysine 102 coordinates L-aspartate. Carbamoyl phosphate is bound by residues arginine 124, histidine 152, and glutamine 155. Residues arginine 190 and arginine 244 each contribute to the L-aspartate site. Residues glycine 285 and proline 286 each contribute to the carbamoyl phosphate site.

Belongs to the aspartate/ornithine carbamoyltransferase superfamily. ATCase family. In terms of assembly, heterododecamer (2C3:3R2) of six catalytic PyrB chains organized as two trimers (C3), and six regulatory PyrI chains organized as three dimers (R2).

It catalyses the reaction carbamoyl phosphate + L-aspartate = N-carbamoyl-L-aspartate + phosphate + H(+). It participates in pyrimidine metabolism; UMP biosynthesis via de novo pathway; (S)-dihydroorotate from bicarbonate: step 2/3. In terms of biological role, catalyzes the condensation of carbamoyl phosphate and aspartate to form carbamoyl aspartate and inorganic phosphate, the committed step in the de novo pyrimidine nucleotide biosynthesis pathway. The polypeptide is Aspartate carbamoyltransferase catalytic subunit (Novosphingobium aromaticivorans (strain ATCC 700278 / DSM 12444 / CCUG 56034 / CIP 105152 / NBRC 16084 / F199)).